A 450-amino-acid chain; its full sequence is UDP-N-acetylmuramoylalanine--D-glutamate ligase (450 aa).

Position 119-125 (119-125 (GSNGKTT)) interacts with ATP.

This sequence belongs to the MurCDEF family.

The protein localises to the cytoplasm. The catalysed reaction is UDP-N-acetyl-alpha-D-muramoyl-L-alanine + D-glutamate + ATP = UDP-N-acetyl-alpha-D-muramoyl-L-alanyl-D-glutamate + ADP + phosphate + H(+). It participates in cell wall biogenesis; peptidoglycan biosynthesis. Cell wall formation. Catalyzes the addition of glutamate to the nucleotide precursor UDP-N-acetylmuramoyl-L-alanine (UMA). This Bacillus cereus (strain AH187) protein is UDP-N-acetylmuramoylalanine--D-glutamate ligase.